A 107-amino-acid polypeptide reads, in one-letter code: UPF0145 protein Sfri_2095 (107 aa).

Belongs to the UPF0145 family.

This chain is UPF0145 protein Sfri_2095, found in Shewanella frigidimarina (strain NCIMB 400).